Reading from the N-terminus, the 177-residue chain is Ubiquinol-cytochrome c reductase iron-sulfur subunit (177 aa).

The chain crosses the membrane as a helical span at residues 18–38 (IVLTASSVAAVGAACAFWPII). Residues 88 to 175 (ARAVKMSELI…YIFISDTKIR (88 aa)) form the Rieske domain. Residues Cys120, His122, Cys139, and His142 each coordinate [2Fe-2S] cluster. Cys125 and Cys141 are disulfide-bonded.

The protein belongs to the Rieske iron-sulfur protein family. The main subunits of complex b-c1 are: cytochrome b, cytochrome c1 and the Rieske protein. The cofactor is [2Fe-2S] cluster.

The protein localises to the cell membrane. The catalysed reaction is a quinol + 2 Fe(III)-[cytochrome c](out) = a quinone + 2 Fe(II)-[cytochrome c](out) + 2 H(+)(out). Functionally, component of the ubiquinol-cytochrome c reductase complex (complex III or cytochrome b-c1 complex), which is a respiratory chain that generates an electrochemical potential coupled to ATP synthesis. This Rickettsia typhi (strain ATCC VR-144 / Wilmington) protein is Ubiquinol-cytochrome c reductase iron-sulfur subunit (petA).